Here is a 455-residue protein sequence, read N- to C-terminus: Bifunctional protein GlmU (455 aa).

The tract at residues 1 to 226 (MIAVAILAAG…YQEILGINDR (226 aa)) is pyrophosphorylase. UDP-N-acetyl-alpha-D-glucosamine-binding positions include 7-10 (LAAG), lysine 21, glutamine 73, and 78-79 (GT). Aspartate 103 lines the Mg(2+) pocket. Residues glycine 140, glutamate 155, asparagine 170, and asparagine 224 each coordinate UDP-N-acetyl-alpha-D-glucosamine. Residue asparagine 224 coordinates Mg(2+). A linker region spans residues 227-247 (KQLATAYKILQDRIKDDWLVA). The N-acetyltransferase stretch occupies residues 248 to 455 (GVTIMDPDSI…RPISSKQTEK (208 aa)). Arginine 329 and lysine 347 together coordinate UDP-N-acetyl-alpha-D-glucosamine. Catalysis depends on histidine 359, which acts as the Proton acceptor. Residues tyrosine 362 and asparagine 373 each contribute to the UDP-N-acetyl-alpha-D-glucosamine site. Residues alanine 376, 382–383 (NY), alanine 419, and arginine 436 each bind acetyl-CoA.

This sequence in the N-terminal section; belongs to the N-acetylglucosamine-1-phosphate uridyltransferase family. The protein in the C-terminal section; belongs to the transferase hexapeptide repeat family. Homotrimer. Mg(2+) serves as cofactor.

The protein resides in the cytoplasm. It catalyses the reaction alpha-D-glucosamine 1-phosphate + acetyl-CoA = N-acetyl-alpha-D-glucosamine 1-phosphate + CoA + H(+). The enzyme catalyses N-acetyl-alpha-D-glucosamine 1-phosphate + UTP + H(+) = UDP-N-acetyl-alpha-D-glucosamine + diphosphate. It functions in the pathway nucleotide-sugar biosynthesis; UDP-N-acetyl-alpha-D-glucosamine biosynthesis; N-acetyl-alpha-D-glucosamine 1-phosphate from alpha-D-glucosamine 6-phosphate (route II): step 2/2. Its pathway is nucleotide-sugar biosynthesis; UDP-N-acetyl-alpha-D-glucosamine biosynthesis; UDP-N-acetyl-alpha-D-glucosamine from N-acetyl-alpha-D-glucosamine 1-phosphate: step 1/1. The protein operates within bacterial outer membrane biogenesis; LPS lipid A biosynthesis. Functionally, catalyzes the last two sequential reactions in the de novo biosynthetic pathway for UDP-N-acetylglucosamine (UDP-GlcNAc). The C-terminal domain catalyzes the transfer of acetyl group from acetyl coenzyme A to glucosamine-1-phosphate (GlcN-1-P) to produce N-acetylglucosamine-1-phosphate (GlcNAc-1-P), which is converted into UDP-GlcNAc by the transfer of uridine 5-monophosphate (from uridine 5-triphosphate), a reaction catalyzed by the N-terminal domain. In Acaryochloris marina (strain MBIC 11017), this protein is Bifunctional protein GlmU.